Here is a 583-residue protein sequence, read N- to C-terminus: Afadin- and alpha-actinin-binding protein (583 aa).

3 coiled-coil regions span residues 108–220 (NNVE…LAIE), 255–333 (DYEA…QLTN), and 420–453 (EEKE…AIRL). The segment at 285-328 (LSPCPPLNRGGSAEESQELGDSDREERSAETSRETLDQSCEHAR) is disordered. The span at 305–328 (DSDREERSAETSRETLDQSCEHAR) shows a compositional bias: basic and acidic residues. The segment at 480-527 (DRMRSSSSDGQSALSVKSEPEIRTSSSKAPPVKSSAYTTFSTPKSSKS) is disordered. A compositionally biased stretch (polar residues) spans 484–494 (SSSSDGQSALS). Residues 504-515 (SSSKAPPVKSSA) are compositionally biased toward low complexity. The segment covering 516–527 (YTTFSTPKSSKS) has biased composition (polar residues).

The protein belongs to the ADIP family.

The protein resides in the cell junction. It is found in the adherens junction. The protein localises to the cytoplasm. It localises to the cytoskeleton. Its subcellular location is the microtubule organizing center. The protein resides in the centrosome. It is found in the centriolar satellite. In terms of biological role, belongs to an adhesion system, which plays a role in the organization of homotypic, interneuronal and heterotypic cell-cell adherens junctions (AJs). Involved in cell movement. Acts as a centrosome maturation factor, probably by maintaining the integrity of the pericentriolar material and proper microtubule nucleation at mitotic spindle poles. The polypeptide is Afadin- and alpha-actinin-binding protein (ssx2ip) (Oryzias latipes (Japanese rice fish)).